The following is a 71-amino-acid chain: UPF0346 protein SSU05_1322 (71 aa).

It belongs to the UPF0346 family.

This Streptococcus suis (strain 05ZYH33) protein is UPF0346 protein SSU05_1322.